A 199-amino-acid polypeptide reads, in one-letter code: Inner membrane-spanning protein YciB (199 aa).

6 consecutive transmembrane segments (helical) span residues 4–24, 36–56, 64–84, 90–110, 135–155, and 162–182; these read FIDFIPLILFFIVYKLEPRIV, IFSATAVLILASLLVYGTLFL, GQWITLLACLVFGGMTLTFQS, WKAPVVNWLFALGFAASHFIG, LAWVAFFVFSGCANLFVAFTF, and FKVFGSLGMTVLFLVGQGVFL.

This sequence belongs to the YciB family.

The protein resides in the cell inner membrane. In terms of biological role, plays a role in cell envelope biogenesis, maintenance of cell envelope integrity and membrane homeostasis. The sequence is that of Inner membrane-spanning protein YciB from Azotobacter vinelandii (strain DJ / ATCC BAA-1303).